The following is a 393-amino-acid chain: CCA-adding enzyme (393 aa).

ATP contacts are provided by Gly27 and Arg30. Residues Gly27 and Arg30 each coordinate CTP. Positions 40 and 42 each coordinate Mg(2+). ATP-binding residues include Arg111, Asp154, Arg157, Arg160, and Arg163. Positions 111, 154, 157, 160, and 163 each coordinate CTP.

Belongs to the tRNA nucleotidyltransferase/poly(A) polymerase family. Bacterial CCA-adding enzyme type 3 subfamily. As to quaternary structure, homodimer. It depends on Mg(2+) as a cofactor.

The catalysed reaction is a tRNA precursor + 2 CTP + ATP = a tRNA with a 3' CCA end + 3 diphosphate. It carries out the reaction a tRNA with a 3' CCA end + 2 CTP + ATP = a tRNA with a 3' CCACCA end + 3 diphosphate. Functionally, catalyzes the addition and repair of the essential 3'-terminal CCA sequence in tRNAs without using a nucleic acid template. Adds these three nucleotides in the order of C, C, and A to the tRNA nucleotide-73, using CTP and ATP as substrates and producing inorganic pyrophosphate. tRNA 3'-terminal CCA addition is required both for tRNA processing and repair. Also involved in tRNA surveillance by mediating tandem CCA addition to generate a CCACCA at the 3' terminus of unstable tRNAs. While stable tRNAs receive only 3'-terminal CCA, unstable tRNAs are marked with CCACCA and rapidly degraded. In Listeria innocua serovar 6a (strain ATCC BAA-680 / CLIP 11262), this protein is CCA-adding enzyme.